We begin with the raw amino-acid sequence, 454 residues long: Protein translocase subunit SecY (454 aa).

Helical transmembrane passes span 43-63 (LTIALLVFIIKIGMAIPLPYI), 97-117 (FTLGITPSINASIILQLAFVI), 144-164 (TLLLAITQSVFLIFSLRAFIF), 168-188 (ILKLFELSCVLSSGAMIILWI), 201-221 (SSFLIFLNIVSVLPEQIGMSF), 226-246 (IFSFEGLIVILTFSITVWAAI), 289-309 (PVVFASYLIPILKTGGIYILL), 334-354 (IVEAGLICLFALFYSGLIIDP), 390-410 (LIGALILAFNVVLLNLVGFVF), and 414-434 (IFKGFSIGSQIILLGVVTEIL).

The protein belongs to the SecY/SEC61-alpha family. In terms of assembly, component of the plastid Sec protein translocase complex, which is composed of at least SecY and SecE.

The protein resides in the plastid. It localises to the chloroplast thylakoid membrane. In terms of biological role, the central subunit of the protein translocation channel SecYE. Consists of two halves formed by TMs 1-5 and 6-10. These two domains form a lateral gate at the front which open onto the bilayer between TMs 2 and 7, and are clamped together by SecE at the back. The channel is closed by both a pore ring composed of hydrophobic SecY resides and a short helix (helix 2A) on the extracellular side of the membrane which forms a plug. This Heterosigma akashiwo (strain NIES-293 / 8280G21-1) protein is Protein translocase subunit SecY.